A 426-amino-acid polypeptide reads, in one-letter code: 3-phosphoshikimate 1-carboxyvinyltransferase (426 aa).

3-phosphoshikimate is bound by residues Lys-21, Ser-22, and Arg-26. Lys-21 is a binding site for phosphoenolpyruvate. 2 residues coordinate phosphoenolpyruvate: Gly-93 and Arg-121. 4 residues coordinate 3-phosphoshikimate: Ser-165, Gln-167, Asp-313, and Lys-340. Gln-167 serves as a coordination point for phosphoenolpyruvate. Asp-313 functions as the Proton acceptor in the catalytic mechanism. Residues Arg-344 and Arg-386 each contribute to the phosphoenolpyruvate site.

It belongs to the EPSP synthase family. As to quaternary structure, monomer.

It is found in the cytoplasm. It catalyses the reaction 3-phosphoshikimate + phosphoenolpyruvate = 5-O-(1-carboxyvinyl)-3-phosphoshikimate + phosphate. It functions in the pathway metabolic intermediate biosynthesis; chorismate biosynthesis; chorismate from D-erythrose 4-phosphate and phosphoenolpyruvate: step 6/7. In terms of biological role, catalyzes the transfer of the enolpyruvyl moiety of phosphoenolpyruvate (PEP) to the 5-hydroxyl of shikimate-3-phosphate (S3P) to produce enolpyruvyl shikimate-3-phosphate and inorganic phosphate. The polypeptide is 3-phosphoshikimate 1-carboxyvinyltransferase (Solibacter usitatus (strain Ellin6076)).